Consider the following 378-residue polypeptide: Anhydro-N-acetylmuramic acid kinase (378 aa).

Residue 9-16 coordinates ATP; that stretch reads GTSADGID.

Belongs to the anhydro-N-acetylmuramic acid kinase family.

The catalysed reaction is 1,6-anhydro-N-acetyl-beta-muramate + ATP + H2O = N-acetyl-D-muramate 6-phosphate + ADP + H(+). The protein operates within amino-sugar metabolism; 1,6-anhydro-N-acetylmuramate degradation. Its pathway is cell wall biogenesis; peptidoglycan recycling. In terms of biological role, catalyzes the specific phosphorylation of 1,6-anhydro-N-acetylmuramic acid (anhMurNAc) with the simultaneous cleavage of the 1,6-anhydro ring, generating MurNAc-6-P. Is required for the utilization of anhMurNAc either imported from the medium or derived from its own cell wall murein, and thus plays a role in cell wall recycling. The sequence is that of Anhydro-N-acetylmuramic acid kinase from Prochlorococcus marinus (strain NATL1A).